Here is a 753-residue protein sequence, read N- to C-terminus: Cell cycle progression protein 1 (753 aa).

Residues 1–218 (MSESSSDSDS…KRHFSRGLNK (218 aa)) lie on the Cytoplasmic side of the membrane. The interval 1 to 307 (MSESSSDSDS…QKKNLAAENQ (307 aa)) is interaction with MCF2L and SRC. Residues 57 to 211 (HGGEESSANN…EPSKEPSKRH (155 aa)) are disordered. Composition is skewed to polar residues over residues 62–78 (SSAN…LSSM) and 122–138 (QEVT…LNMG). Basic residues predominate over residues 176–185 (PRRRRNRKKT). Serine 187 bears the Phosphoserine mark. Acidic residues predominate over residues 190 to 201 (ESEEPPLAEPED). Residues 219–239 (CVILALVIAVSMGFGHFYGTI) form a helical; Signal-anchor for type II membrane protein membrane-spanning segment. Topologically, residues 240-753 (QIQKQLVRKT…YIKPCYYNSF (514 aa)) are lumenal. Residues 298-449 (QKKNLAAENQ…EQQRSDLWER (152 aa)) adopt a coiled-coil conformation. A compositionally biased stretch (basic and acidic residues) spans 457–467 (QHGKQETDGRK). Residues 457-484 (QHGKQETDGRKRGSRGSHRAKSKSKETF) form a disordered region. Over residues 468 to 478 (RGSRGSHRAKS) the composition is skewed to basic residues. Positions 503 to 529 (VRHHKEKIKQAKEAVKENLKKFSDSVK) form a coiled coil. Residues 553–563 (APKEAATEKTR) are compositionally biased toward basic and acidic residues. A disordered region spans residues 553–606 (APKEAATEKTRTAYSYSSYSQQEAPNQNQNCRRPSAQRDGGREKPSHSEEIRKN). Residues 573 to 584 (QQEAPNQNQNCR) are compositionally biased toward polar residues. The span at 591 to 605 (DGGREKPSHSEEIRK) shows a compositional bias: basic and acidic residues.

This sequence belongs to the CCPG1 family. As to quaternary structure, interacts with MCF2L. May interact with MCF2, ARHGEF1, BCR, VAV1 and FGD1, but not with TIAM1. Interacts with GTP-bound CDC42 and SRC.

It localises to the cytoplasmic granule membrane. In terms of biological role, acts as an assembly platform for Rho protein signaling complexes. Limits guanine nucleotide exchange activity of MCF2L toward RHOA, which results in an inhibition of both its transcriptional activation ability and its transforming activity. Does not inhibit activity of MCF2L toward CDC42, or activity of MCF2 toward either RHOA or CDC42. May be involved in cell cycle regulation. The sequence is that of Cell cycle progression protein 1 (Ccpg1) from Mus musculus (Mouse).